The sequence spans 169 residues: Large ribosomal subunit protein uL5 (169 aa).

The protein belongs to the universal ribosomal protein uL5 family. In terms of assembly, part of the 50S ribosomal subunit; contacts the 5S rRNA and probably tRNA. Forms a bridge to the 30S subunit in the 70S ribosome.

Functionally, this is one of the proteins that bind and probably mediate the attachment of the 5S RNA into the large ribosomal subunit, where it forms part of the central protuberance. In the 70S ribosome it contacts protein S13 of the 30S subunit (bridge B1b), connecting the 2 subunits; this bridge is implicated in subunit movement. May contact the P site tRNA; the 5S rRNA and some of its associated proteins might help stabilize positioning of ribosome-bound tRNAs. The polypeptide is Large ribosomal subunit protein uL5 (Methanosarcina mazei (strain ATCC BAA-159 / DSM 3647 / Goe1 / Go1 / JCM 11833 / OCM 88) (Methanosarcina frisia)).